The primary structure comprises 76 residues: NADH dehydrogenase [ubiquinone] 1 subunit C1, mitochondrial (76 aa).

The transit peptide at 1–27 directs the protein to the mitochondrion; the sequence is MAPSALLRPFWKLLAPARFPSVSSSRS. The helical transmembrane segment at 41 to 59 threads the bilayer; that stretch reads WLKVGLTLGTSVFLWIYLI.

Belongs to the complex I NDUFC1 subunit family. As to quaternary structure, complex I is composed of 45 different subunits.

It localises to the mitochondrion inner membrane. In terms of biological role, accessory subunit of the mitochondrial membrane respiratory chain NADH dehydrogenase (Complex I), that is believed not to be involved in catalysis. Complex I functions in the transfer of electrons from NADH to the respiratory chain. The immediate electron acceptor for the enzyme is believed to be ubiquinone. The protein is NADH dehydrogenase [ubiquinone] 1 subunit C1, mitochondrial (NDUFC1) of Bos taurus (Bovine).